A 205-amino-acid polypeptide reads, in one-letter code: Spermatogenesis-associated protein 24 (205 aa).

Positions 17-166 (LALDQLRDVI…QQKQIFRNHM (150 aa)) form a coiled coil. Positions 138-185 (EDILNGKENEIKELQQVISQQKQIFRNHMSDFRIQKQQESYMAQVLDQ) are required for interaction with CBX5 and TBPL1. The interval 180 to 205 (AQVLDQKHKKASGTRQARSHQHPREK) is disordered. A compositionally biased stretch (basic residues) spans 186–205 (KHKKASGTRQARSHQHPREK).

It belongs to the SPATA24 family. In terms of assembly, homodimer. Interacts with CBX3, CBX5, GMNN, GTF2B, TBPL1 and the polycomb proteins PHCF2, RNF2 and SCMH1 but not with CBX1 or PCGF2.

The protein localises to the cytoplasm. Its subcellular location is the nucleus. It localises to the nucleolus. The protein resides in the nucleoplasm. Binds DNA with high affinity but does not bind to TATA boxes. Synergises with GMNN and TBP in activation of TATA box-containing promoters and with GMNN and TBPL1 in activation of the NF1 TATA-less promoter. May play a role in cytoplasm movement and removal during spermiogenesis. The sequence is that of Spermatogenesis-associated protein 24 (SPATA24) from Homo sapiens (Human).